Reading from the N-terminus, the 432-residue chain is Adenylosuccinate synthetase (432 aa).

Residues 13–19 (GDEGKGK) and 41–43 (GHT) contribute to the GTP site. Aspartate 14 acts as the Proton acceptor in catalysis. Mg(2+) is bound by residues aspartate 14 and glycine 41. Residues 14–17 (DEGK), 39–42 (NAGH), threonine 130, arginine 144, glutamine 225, threonine 240, and arginine 304 contribute to the IMP site. Histidine 42 acts as the Proton donor in catalysis. 300–306 (ATTGRRR) provides a ligand contact to substrate. Residues arginine 306, 332 to 334 (KLD), and 415 to 417 (STG) each bind GTP.

The protein belongs to the adenylosuccinate synthetase family. Homodimer. Mg(2+) serves as cofactor.

It localises to the cytoplasm. The enzyme catalyses IMP + L-aspartate + GTP = N(6)-(1,2-dicarboxyethyl)-AMP + GDP + phosphate + 2 H(+). It functions in the pathway purine metabolism; AMP biosynthesis via de novo pathway; AMP from IMP: step 1/2. Plays an important role in the de novo pathway of purine nucleotide biosynthesis. Catalyzes the first committed step in the biosynthesis of AMP from IMP. The polypeptide is Adenylosuccinate synthetase (Salmonella choleraesuis (strain SC-B67)).